Reading from the N-terminus, the 419-residue chain is Serine/threonine-protein kinase Kist (419 aa).

Positions 23 to 304 (WQVQSRLGSG…AEMALCSPFF (282 aa)) constitute a Protein kinase domain. Residues 29–37 (LGSGSSASV) and Lys-54 each bind ATP. Residues Asp-141 and Asp-158 each act as proton acceptor in the active site. Positions 324-406 (RLLNVLDDDY…KFVVATFYPL (83 aa)) constitute an RRM domain.

The protein belongs to the protein kinase superfamily. Ser/Thr protein kinase family. Interacts with stathmin, PAM and CDKN1B/p27Kip1.

Its subcellular location is the nucleus. It carries out the reaction L-seryl-[protein] + ATP = O-phospho-L-seryl-[protein] + ADP + H(+). The catalysed reaction is L-threonyl-[protein] + ATP = O-phospho-L-threonyl-[protein] + ADP + H(+). Its function is as follows. Upon serum stimulation, phosphorylates CDKN1B/p27Kip1, thus controlling CDKN1B subcellular location and cell cycle progression in G1 phase. May be involved in trafficking and/or processing of RNA. The polypeptide is Serine/threonine-protein kinase Kist (UHMK1) (Pongo abelii (Sumatran orangutan)).